Consider the following 320-residue polypeptide: 4-hydroxy-3-methylbut-2-enyl diphosphate reductase 2 (320 aa).

Cys18 lines the [4Fe-4S] cluster pocket. 2 residues coordinate (2E)-4-hydroxy-3-methylbut-2-enyl diphosphate: His47 and His81. Residues His47 and His81 each coordinate dimethylallyl diphosphate. Residues His47 and His81 each contribute to the isopentenyl diphosphate site. Cys103 is a binding site for [4Fe-4S] cluster. Position 131 (His131) interacts with (2E)-4-hydroxy-3-methylbut-2-enyl diphosphate. A dimethylallyl diphosphate-binding site is contributed by His131. His131 serves as a coordination point for isopentenyl diphosphate. Catalysis depends on Glu133, which acts as the Proton donor. Thr172 provides a ligand contact to (2E)-4-hydroxy-3-methylbut-2-enyl diphosphate. Position 202 (Cys202) interacts with [4Fe-4S] cluster. (2E)-4-hydroxy-3-methylbut-2-enyl diphosphate contacts are provided by Ser230, Ser231, Asn232, and Ser275. The dimethylallyl diphosphate site is built by Ser230, Ser231, Asn232, and Ser275. Isopentenyl diphosphate contacts are provided by Ser230, Ser231, Asn232, and Ser275.

It belongs to the IspH family. It depends on [4Fe-4S] cluster as a cofactor.

The catalysed reaction is isopentenyl diphosphate + 2 oxidized [2Fe-2S]-[ferredoxin] + H2O = (2E)-4-hydroxy-3-methylbut-2-enyl diphosphate + 2 reduced [2Fe-2S]-[ferredoxin] + 2 H(+). The enzyme catalyses dimethylallyl diphosphate + 2 oxidized [2Fe-2S]-[ferredoxin] + H2O = (2E)-4-hydroxy-3-methylbut-2-enyl diphosphate + 2 reduced [2Fe-2S]-[ferredoxin] + 2 H(+). The protein operates within isoprenoid biosynthesis; dimethylallyl diphosphate biosynthesis; dimethylallyl diphosphate from (2E)-4-hydroxy-3-methylbutenyl diphosphate: step 1/1. It participates in isoprenoid biosynthesis; isopentenyl diphosphate biosynthesis via DXP pathway; isopentenyl diphosphate from 1-deoxy-D-xylulose 5-phosphate: step 6/6. Functionally, catalyzes the conversion of 1-hydroxy-2-methyl-2-(E)-butenyl 4-diphosphate (HMBPP) into a mixture of isopentenyl diphosphate (IPP) and dimethylallyl diphosphate (DMAPP). Acts in the terminal step of the DOXP/MEP pathway for isoprenoid precursor biosynthesis. In Rhodopseudomonas palustris (strain ATCC BAA-98 / CGA009), this protein is 4-hydroxy-3-methylbut-2-enyl diphosphate reductase 2.